The sequence spans 108 residues: Ig kappa chain V-V region HP 93G7 (108 aa).

The tract at residues 1–23 is framework-1; it reads DIQMTQTTSSLSASLGDRVTISC. A disulfide bond links C23 and C88. The tract at residues 24–34 is complementarity-determining-1; sequence RASQDISNYLN. Positions 35 to 49 are framework-2; sequence WYQQKPDGTVKLLIY. A complementarity-determining-2 region spans residues 50–56; sequence YTSRLHS. Positions 57–88 are framework-3; that stretch reads GVPSRFSGSGSGTDYSLTISNLEQEDIATYFC. The interval 89 to 97 is complementarity-determining-3; that stretch reads QQGNMLPRT. The framework-4 stretch occupies residues 98-108; the sequence is FGGGTKLEIKR.

This is Ig kappa chain V-V region HP 93G7 from Mus musculus (Mouse).